A 332-amino-acid polypeptide reads, in one-letter code: Pyrroline-5-carboxylate reductase (332 aa).

It belongs to the pyrroline-5-carboxylate reductase family.

It catalyses the reaction L-proline + NADP(+) = (S)-1-pyrroline-5-carboxylate + NADPH + 2 H(+). The enzyme catalyses L-proline + NAD(+) = (S)-1-pyrroline-5-carboxylate + NADH + 2 H(+). It participates in amino-acid biosynthesis; L-proline biosynthesis; L-proline from L-glutamate 5-semialdehyde: step 1/1. In Neurospora crassa (strain ATCC 24698 / 74-OR23-1A / CBS 708.71 / DSM 1257 / FGSC 987), this protein is Pyrroline-5-carboxylate reductase (pro-1).